An 823-amino-acid chain; its full sequence is Ciliated left-right organizer ZP-N domains-containing protein (823 aa).

Positions 1–22 are cleaved as a signal peptide; it reads MWGSPALAWAVWLACVQPTVFP. Disordered stretches follow at residues 206–242, 269–422, 434–520, and 632–656; these read MGLY…LLPL, LVHI…DLLH, GPFL…SPSP, and LPRE…EGPG. Over residues 216-230 the composition is skewed to pro residues; that stretch reads TVTVQSPRQGLLQRW. The span at 389–402 shows a compositional bias: low complexity; that stretch reads GPETPPAGVPPAAS.

The protein localises to the secreted. Plays a role in left-right patterning process. This chain is Ciliated left-right organizer ZP-N domains-containing protein, found in Homo sapiens (Human).